Reading from the N-terminus, the 478-residue chain is Serine hydroxymethyltransferase (478 aa).

(6S)-5,6,7,8-tetrahydrofolate-binding positions include Leu161 and 165–167 (GHL). At Lys273 the chain carries N6-(pyridoxal phosphate)lysine. Glu291 serves as a coordination point for (6S)-5,6,7,8-tetrahydrofolate.

It belongs to the SHMT family. In terms of assembly, homodimer. It depends on pyridoxal 5'-phosphate as a cofactor.

The protein resides in the cytoplasm. The enzyme catalyses (6R)-5,10-methylene-5,6,7,8-tetrahydrofolate + glycine + H2O = (6S)-5,6,7,8-tetrahydrofolate + L-serine. It functions in the pathway one-carbon metabolism; tetrahydrofolate interconversion. It participates in amino-acid biosynthesis; glycine biosynthesis; glycine from L-serine: step 1/1. In terms of biological role, catalyzes the reversible interconversion of serine and glycine with tetrahydrofolate (THF) serving as the one-carbon carrier. This reaction serves as the major source of one-carbon groups required for the biosynthesis of purines, thymidylate, methionine, and other important biomolecules. Also exhibits THF-independent aldolase activity toward beta-hydroxyamino acids, producing glycine and aldehydes, via a retro-aldol mechanism. In Salinispora tropica (strain ATCC BAA-916 / DSM 44818 / JCM 13857 / NBRC 105044 / CNB-440), this protein is Serine hydroxymethyltransferase.